Here is a 182-residue protein sequence, read N- to C-terminus: Lipoprotein signal peptidase (182 aa).

Transmembrane regions (helical) follow at residues 21–41, 74–94, and 98–118; these read LLLS…VLAV, GYTW…FWMG, and VSPW…GNLV. Active-site residues include Asp134 and Asp148. Residues 146-166 form a helical membrane-spanning segment; it reads VADPSVVGGAILLVVLSIFGY.

This sequence belongs to the peptidase A8 family.

It is found in the cell membrane. The enzyme catalyses Release of signal peptides from bacterial membrane prolipoproteins. Hydrolyzes -Xaa-Yaa-Zaa-|-(S,diacylglyceryl)Cys-, in which Xaa is hydrophobic (preferably Leu), and Yaa (Ala or Ser) and Zaa (Gly or Ala) have small, neutral side chains.. It participates in protein modification; lipoprotein biosynthesis (signal peptide cleavage). This protein specifically catalyzes the removal of signal peptides from prolipoproteins. The polypeptide is Lipoprotein signal peptidase (Mycobacterium avium (strain 104)).